The sequence spans 203 residues: CCG-binding protein 1 (203 aa).

Residues 156 to 178 (IPDGLPKSEQELEEEEKSKMPDS) form a disordered region. Over residues 161 to 175 (PKSEQELEEEEKSKM) the composition is skewed to basic and acidic residues.

Homotetramer. Interacts with MEE12/CCG, MED7A, MED7B, MED9, AGL49, AGL53, AGL75, AGL80, AGL81, AGL82, AGL103 and NRPB1 (via CTD). As to expression, expressed in roots, leaves, stems and flowers. Expressed in the central cell of mature ovules.

Its subcellular location is the nucleus. The protein resides in the cytoplasm. Required for the development of the one-cell zygote and endosperm in embryos. Required for micropylar pollen tube guidance, but has no effect on ovule development and gametophytic cell fate specification. May connect transcription factors and the Pol II machinery to regulate pollen tube attraction, via its interactions with AGAMOUS-like (AGL) transcription factors, MEE14/CCG and the Mediator complex. The sequence is that of CCG-binding protein 1 from Arabidopsis thaliana (Mouse-ear cress).